An 81-amino-acid chain; its full sequence is ATP synthase subunit c (81 aa).

2 helical membrane passes run 7 to 27 and 57 to 77; these read AASV…PGIG and LAFM…LLFA.

The protein belongs to the ATPase C chain family. In terms of assembly, F-type ATPases have 2 components, F(1) - the catalytic core - and F(0) - the membrane proton channel. F(1) has five subunits: alpha(3), beta(3), gamma(1), delta(1), epsilon(1). F(0) has four main subunits: a(1), b(1), b'(1) and c(10-14). The alpha and beta chains form an alternating ring which encloses part of the gamma chain. F(1) is attached to F(0) by a central stalk formed by the gamma and epsilon chains, while a peripheral stalk is formed by the delta, b and b' chains.

The protein resides in the cellular thylakoid membrane. Functionally, f(1)F(0) ATP synthase produces ATP from ADP in the presence of a proton or sodium gradient. F-type ATPases consist of two structural domains, F(1) containing the extramembraneous catalytic core and F(0) containing the membrane proton channel, linked together by a central stalk and a peripheral stalk. During catalysis, ATP synthesis in the catalytic domain of F(1) is coupled via a rotary mechanism of the central stalk subunits to proton translocation. Key component of the F(0) channel; it plays a direct role in translocation across the membrane. A homomeric c-ring of between 10-14 subunits forms the central stalk rotor element with the F(1) delta and epsilon subunits. The protein is ATP synthase subunit c of Nostoc sp. (strain PCC 7120 / SAG 25.82 / UTEX 2576).